Consider the following 86-residue polypeptide: Large ribosomal subunit protein bL31B (86 aa).

It belongs to the bacterial ribosomal protein bL31 family. Type B subfamily. Part of the 50S ribosomal subunit.

The protein is Large ribosomal subunit protein bL31B of Burkholderia cenocepacia (strain ATCC BAA-245 / DSM 16553 / LMG 16656 / NCTC 13227 / J2315 / CF5610) (Burkholderia cepacia (strain J2315)).